Consider the following 222-residue polypeptide: Glutathione S-transferase U21 (222 aa).

The GST N-terminal domain maps to 3-83 (AEVILLGFWP…YIDEVWSDNN (81 aa)). Residues 13–14 (SM), 40–41 (NK), 54–55 (TI), and 67–68 (ES) each bind glutathione. One can recognise a GST C-terminal domain in the interval 89–211 (DPYHRAQALF…LPDSEKVVGY (123 aa)).

This sequence belongs to the GST superfamily. Tau family.

Its subcellular location is the cytoplasm. It is found in the cytosol. It carries out the reaction RX + glutathione = an S-substituted glutathione + a halide anion + H(+). Functionally, may be involved in the conjugation of reduced glutathione to a wide number of exogenous and endogenous hydrophobic electrophiles and have a detoxification role against certain herbicides. This chain is Glutathione S-transferase U21 (GSTU21), found in Arabidopsis thaliana (Mouse-ear cress).